A 622-amino-acid chain; its full sequence is UvrABC system protein C (622 aa).

Positions Asp13–Ile92 constitute a GIY-YIG domain. The 36-residue stretch at Lys204–Ile239 folds into the UVR domain.

It belongs to the UvrC family. As to quaternary structure, interacts with UvrB in an incision complex.

Its subcellular location is the cytoplasm. In terms of biological role, the UvrABC repair system catalyzes the recognition and processing of DNA lesions. UvrC both incises the 5' and 3' sides of the lesion. The N-terminal half is responsible for the 3' incision and the C-terminal half is responsible for the 5' incision. This Clostridium kluyveri (strain ATCC 8527 / DSM 555 / NBRC 12016 / NCIMB 10680 / K1) protein is UvrABC system protein C.